Reading from the N-terminus, the 731-residue chain is Alpha-xylosidase (731 aa).

Residues Asp-353 and Glu-356 contribute to the active site. The active-site Proton donor is Asp-428.

This sequence belongs to the glycosyl hydrolase 31 family. In terms of assembly, monomer.

The catalysed reaction is Hydrolysis of terminal, non-reducing alpha-D-xylose residues with release of alpha-D-xylose.. Functionally, catalyzes the liberation of alpha-xylose from the non-reducing terminal glucose of xyloglucan oligosaccharides. Has high hydrolytic activity on the disaccharide isoprimeverose. Follows a retaining mechanism of substrate hydrolysis. The chain is Alpha-xylosidase (xylS) from Saccharolobus solfataricus (strain ATCC 35092 / DSM 1617 / JCM 11322 / P2) (Sulfolobus solfataricus).